A 569-amino-acid chain; its full sequence is MLO-like protein 10 (569 aa).

The Extracellular segment spans residues 1–41 (MATRCFWCWTTLLFCSQLLTGFARASSAGGAKEKGLSQTPT). A helical membrane pass occupies residues 42 to 62 (WAVALVCTFFILVSVLLEKAL). Over 63 to 85 (HRVATWLWEKHKNSLLEALEKIK) the chain is Cytoplasmic. Residues 86–106 (AELMILGFISLLLTFGEQYIL) form a helical membrane-spanning segment. Residues 107–163 (KICIPEKAAASMLPCPAPSTHDQDKTHRRRLAAATTSSRCDEGHEPLIPATGLHQLH) lie on the Extracellular side of the membrane. A helical membrane pass occupies residues 164 to 184 (ILLFFMAAFHILYSFITMMLG). Topologically, residues 185 to 286 (RLKIRGWKKW…IKRSLEDDFK (102 aa)) are cytoplasmic. The helical transmembrane segment at 287-307 (VVVGISPLLWASFVIFLLLNV) threads the bilayer. Position 308 (asparagine 308) is a topological domain, extracellular. The helical transmembrane segment at 309–329 (GWEALFWASILPVLIILAVST) threads the bilayer. Topologically, residues 330-372 (KLQAILTRMALGITERHAVVQGIPLVHGSDKYFWFNRPQLLLH) are cytoplasmic. Residues 373–393 (LLHFALFQNAFQLTYFFWVWY) traverse the membrane as a helical segment. Topologically, residues 394 to 413 (SFGLKSCFHTDFKLVIVKLS) are extracellular. The helical transmembrane segment at 414–434 (LGVGALILCSYITLPLYALVT) threads the bilayer. The Cytoplasmic segment spans residues 435 to 569 (QMGSNMKKAV…VKNVPANDID (135 aa)). The tract at residues 447–468 (EQMAKALKKWHMTVKKKKGKAR) is calmodulin-binding.

The protein belongs to the MLO family.

Its subcellular location is the membrane. May be involved in modulation of pathogen defense and leaf cell death. Activity seems to be regulated by Ca(2+)-dependent calmodulin binding and seems not to require heterotrimeric G proteins. The chain is MLO-like protein 10 (MLO10) from Arabidopsis thaliana (Mouse-ear cress).